We begin with the raw amino-acid sequence, 125 residues long: C-X-C motif chemokine 9 (125 aa).

Residues 1–21 (MKKSAPLFLGIIFLTLTGVQG) form the signal peptide. Cystine bridges form between Cys30-Cys57 and Cys32-Cys73. Residues 91 to 125 (QVNQKKKQRKGKKYKKTKKVPKVKRSQRPSQKKTT) are disordered. The segment covering 93-125 (NQKKKQRKGKKYKKTKKVPKVKRSQRPSQKKTT) has biased composition (basic residues).

It belongs to the intercrine alpha (chemokine CxC) family.

It localises to the secreted. Cytokine that affects the growth, movement, or activation state of cells that participate in immune and inflammatory response. Chemotactic for activated T-cells. Binds to CXCR3. The chain is C-X-C motif chemokine 9 (CXCL9) from Bos taurus (Bovine).